A 1759-amino-acid chain; its full sequence is Collagen alpha-1(IV) chain (1759 aa).

The first 20 residues, 1–20, serve as a signal peptide directing secretion; it reads MSRLSLLGLTAAVVLLSSFC. Positions 21–194 are cleaved as a propeptide — N-terminal propeptide (7S domain); it reads QDRIHVDAAA…PGNSGYPGLK (174 aa). Disordered regions lie at residues 51-245, 269-415, 548-596, 618-650, 666-720, and 787-1522; these read PGFG…GSYP, KGRD…GIDG, AGDP…PGLP, PAGI…GGPG, IDGK…RGIP, and RGQQ…GTPG. 3 stretches are compositionally biased toward low complexity: residues 104–116, 140–153, and 278–293; these read HPGL…LPGL, PPGQ…PGRP, and PGML…PGLK. The tract at residues 195–1530 is triple-helical region; the sequence is GAKGDPGPYG…PGYPGSPGGW (1336 aa). Composition is skewed to gly residues over residues 324–345, 360–370, and 379–388; these read GEQG…GEPG, GPLGEGTGEAG, and GVQGGKGLPG. 2 stretches are compositionally biased toward low complexity: residues 399-411 and 574-595; these read RGPV…PGQP and MPGA…SPGL. The span at 833–848 shows a compositional bias: low complexity; the sequence is YPGPNGDAGAAGLPGP. Positions 904–913 are enriched in gly residues; sequence GQDGGPGYSG. 4 stretches are compositionally biased toward low complexity: residues 1037 to 1047, 1219 to 1232, 1247 to 1271, and 1281 to 1309; these read YPGQPGDVGYP, ENGD…DGQP, PGRD…PGQD, and QDGY…YGMP. Gly residues predominate over residues 1310-1319; sequence GLPGGPGESG. Low complexity predominate over residues 1341-1357; it reads LPGAPGVPGVEGVPGLE. Residues 1410–1422 are compositionally biased toward basic and acidic residues; the sequence is PRGDDGFPGRDGL. 2 stretches are compositionally biased toward low complexity: residues 1423–1437 and 1472–1482; these read DGLP…LPGP and PPGKAGYPGAP. The segment covering 1495-1504 has biased composition (gly residues); it reads GMPGHGGDQG. The Collagen IV NC1 domain maps to 1535–1759; it reads GFTFAKHSQT…SRCQVCLKNR (225 aa). 6 cysteine pairs are disulfide-bonded: C1550–C1641, C1583–C1638, C1595–C1601, C1660–C1755, C1694–C1752, and C1706–C1712. An S-Lysyl-methionine sulfilimine (Met-Lys) (interchain with K-1741) cross-link involves residue M1623. An S-Lysyl-methionine sulfilimine (Lys-Met) (interchain with M-1623) cross-link involves residue K1741.

It belongs to the type IV collagen family. Trimers of two alpha 1(IV) and one alpha 2(IV) chain. Type IV collagen forms a mesh-like network linked through intermolecular interactions between 7S domains and between NC1 domains. Prolines at the third position of the tripeptide repeating unit (G-X-Y) are hydroxylated in some or all of the chains. In terms of processing, type IV collagens contain numerous cysteine residues which are involved in inter- and intramolecular disulfide bonding. 12 of these, located in the NC1 domain, are conserved in all known type IV collagens. Post-translationally, the trimeric structure of the NC1 domains is stabilized by covalent bonds between Lys and Met residues.

The protein resides in the secreted. The protein localises to the extracellular space. It localises to the extracellular matrix. It is found in the basement membrane. Collagen type IV is specific for basement membranes. Required to restrict presynaptic growth at the neuromuscular junctions (NMJ) in late larval stage and in adult motor neurons. May play a role in axon regeneration in embryos following injury in D-type motor neurons. The sequence is that of Collagen alpha-1(IV) chain from Caenorhabditis elegans.